Reading from the N-terminus, the 264-residue chain is MNSISSVFSSEQSVFIPYISLGDPDYDSCVIWADALIRGGAGILELGIPFTDPVADGPVIQKAFKRSLAHPFSMDKILEVTSEIHKLHPQIPLVYLTYFNPLFSMGLESFTERAKNSGIQGLIIPDLPFDTPEAEEFFSQLERKRIDFIHLVTPATTEDRIRSMKSLASGFIYYVTSYGVTGERGSIASGLEDRIRMVRKIVGLPVCAGFGISTSDQSKVISTYADGVIIGSAVQRIIEENGSDRNNCADKLLAYASEIRASMR.

Active-site proton acceptor residues include Glu-45 and Asp-56.

It belongs to the TrpA family. Tetramer of two alpha and two beta chains.

The catalysed reaction is (1S,2R)-1-C-(indol-3-yl)glycerol 3-phosphate + L-serine = D-glyceraldehyde 3-phosphate + L-tryptophan + H2O. It participates in amino-acid biosynthesis; L-tryptophan biosynthesis; L-tryptophan from chorismate: step 5/5. Functionally, the alpha subunit is responsible for the aldol cleavage of indoleglycerol phosphate to indole and glyceraldehyde 3-phosphate. The protein is Tryptophan synthase alpha chain of Leptospira interrogans serogroup Icterohaemorrhagiae serovar copenhageni (strain Fiocruz L1-130).